The sequence spans 87 residues: Small ribosomal subunit protein bS20 (87 aa).

Residues 1–22 (MANIKSAKKRAVQSEKRRKHNA) are compositionally biased toward basic residues. A disordered region spans residues 1–27 (MANIKSAKKRAVQSEKRRKHNASSRSM).

It belongs to the bacterial ribosomal protein bS20 family.

Its function is as follows. Binds directly to 16S ribosomal RNA. The chain is Small ribosomal subunit protein bS20 from Pectobacterium atrosepticum (strain SCRI 1043 / ATCC BAA-672) (Erwinia carotovora subsp. atroseptica).